A 149-amino-acid chain; its full sequence is Large ribosomal subunit protein uL22 (149 aa).

The protein belongs to the universal ribosomal protein uL22 family. As to quaternary structure, part of the 50S ribosomal subunit.

Its function is as follows. This protein binds specifically to 23S rRNA. It makes multiple contacts with different domains of the 23S rRNA in the assembled 50S subunit and ribosome. Functionally, the globular domain of the protein is located near the polypeptide exit tunnel on the outside of the subunit, while an extended beta-hairpin is found that lines the wall of the exit tunnel in the center of the 70S ribosome. This chain is Large ribosomal subunit protein uL22, found in Picrophilus torridus (strain ATCC 700027 / DSM 9790 / JCM 10055 / NBRC 100828 / KAW 2/3).